The primary structure comprises 1244 residues: Actin cytoskeleton-regulatory complex protein SLA1 (1244 aa).

SH3 domains follow at residues 3-68 (VFLG…IEEA) and 69-132 (PVLK…PENG). Disordered regions lie at residues 128-248 (EPEN…GNHE) and 415-497 (DKKH…PKKS). Residues 140–159 (APAAAEAPAATPAAAPASAA) show a composition bias toward low complexity. A compositionally biased stretch (basic and acidic residues) spans 171–184 (HNDRARMMQSKEDQ). Over residues 199–214 (ARPTATTETTDATAAA) the composition is skewed to low complexity. The segment covering 226-235 (NDNDDEEDDY) has biased composition (acidic residues). The 63-residue stretch at 353 to 415 (KSKKRGIVQY…PAQFIEPVRD (63 aa)) folds into the SH3 3 domain. Basic residues predominate over residues 429 to 447 (SIKKNFTKSPSRSRSRSRS). Phosphoserine is present on residues serine 447, serine 449, and serine 454. Glycyl lysine isopeptide (Lys-Gly) (interchain with G-Cter in ubiquitin) cross-links involve residues lysine 471 and lysine 548. A compositionally biased stretch (basic residues) spans 471 to 484 (KRSRKSSLSSHKKN). 3 disordered regions span residues 558-592 (KAND…RDRR), 610-649 (EERS…SNNN), and 726-791 (PTNA…NLLS). Basic and acidic residues-rich tracts occupy residues 568–592 (TDSR…RDRR) and 610–621 (EERSRLQEKELP). Residues 629 to 649 (TSTTSVPNTTSVPPAESSNNN) show a composition bias toward low complexity. Residues 726 to 756 (PTNATGNMFSQPDGSLNVATSPETSLPQQLL) are compositionally biased toward polar residues. The segment covering 757–771 (PQTTSPAQTAPSTSA) has biased composition (low complexity). Serine 799 is modified (phosphoserine). Residues 813 to 853 (KAAASTPEPNLKDLEPVKTGGTTVPAAPVSSAPVSSAPAPL) form a disordered region. Threonine 831 is modified (phosphothreonine). Low complexity predominate over residues 836 to 851 (VPAAPVSSAPVSSAPA). Threonine 858 carries the phosphothreonine modification. 3 tandem repeats follow at residues 868 to 874 (TGFVMMP), 877 to 883 (TGGDMLP), and 887 to 893 (TGGFVVP). The 16 X 7 AA approximate repeats of T-G-G-A-M-M-P stretch occupies residues 868 to 1205 (TGFVMMPMIT…NTFNTGGAMQ (338 aa)). 2 positions are modified to phosphothreonine: threonine 887 and threonine 904. Repeat copies occupy residues 923–929 (TGGAMMP) and 945–951 (TGGGLIP). Residues threonine 984 and threonine 993 each carry the phosphothreonine modification. Serine 996 is subject to Phosphoserine. 5 repeat units span residues 1003–1009 (TGGTMIP), 1020–1026 (TGGAMMT), 1031–1037 (TGSAMMP), 1048–1054 (TGGAMMP), and 1065–1071 (TGGAMMP). At threonine 1075 the chain carries Phosphothreonine. 6 consecutive repeat copies span residues 1084–1090 (TGGAMIP), 1129–1135 (TGGAMNT), 1155–1161 (TGGVMQE), 1170–1176 (TGGAMQQ), 1185–1191 (TDGIMQQ), and 1200–1206 (TGGAMQQ).

It belongs to the SLA1 family. Component of the PAN1 actin cytoskeleton-regulatory complex. Interacts with ABP1, KRE6, LAS17, LSB5, RSP5, RVS167, VPS1 and YSC84. In terms of processing, phosphorylated by PRK1.

The protein localises to the nucleus. Its subcellular location is the cell membrane. It localises to the endosome membrane. It is found in the cytoplasm. The protein resides in the cytoskeleton. The protein localises to the actin patch. In terms of biological role, component of the PAN1 actin cytoskeleton-regulatory complex required for the internalization of endosomes during actin-coupled endocytosis. The complex links the site of endocytosis to the cell membrane-associated actin cytoskeleton. Mediates uptake of external molecules and vacuolar degradation of plasma membrane proteins. Plays a role in the proper organization of the cell membrane-associated actin cytoskeleton and promotes its destabilization. This is Actin cytoskeleton-regulatory complex protein SLA1 (SLA1) from Saccharomyces cerevisiae (strain ATCC 204508 / S288c) (Baker's yeast).